Here is a 389-residue protein sequence, read N- to C-terminus: MGNQSTKSTHGTTRVSHSKSAHHNSSRVTSDVIPRSASAISSHERFFSDSQSSSPPAVCPVSAPGKYRNFPGKDVPPICLTDEYNNSDDEVFCSTRTSKQSPLATGCPRQNLGSPGNRRSVDSTNSDLLEAVTPRSHISVKRTVSSGTEHAPDHANMQKSSSLKFTRPGVRSETKETTPSTSSNPTMFPCIHQFLHLTQPQILFVRKTWNHARNQGALEPAISIFRNSFFKNPEIRQMIMFGTKNEGHERLKKHAQLFTVLMDDLIANLDSPSATVAGLREAGEKHVWPTRNQYGCPFHAHLLDQFATAMIERTLEWGEKKDRTETTQRGWTKIVLFVTEQLKEGFQDEQKRARRIKAQIKTSAGSSSFEISTKTKQSDMKRFHTLDNM.

Positions 1–15 (MGNQSTKSTHGTTRV) are enriched in polar residues. Disordered stretches follow at residues 1 to 38 (MGNQSTKSTHGTTRVSHSKSAHHNSSRVTSDVIPRSAS), 96 to 123 (RTSKQSPLATGCPRQNLGSPGNRRSVDS), and 143 to 185 (TVSS…SSNP). A compositionally biased stretch (basic residues) spans 16–25 (SHSKSAHHNS). Residues 196–347 (HLTQPQILFV…VTEQLKEGFQ (152 aa)) enclose the Globin domain. Positions 254 and 286 each coordinate heme b. The segment at 367–389 (SSFEISTKTKQSDMKRFHTLDNM) is disordered. Positions 376–389 (KQSDMKRFHTLDNM) are enriched in basic and acidic residues.

Belongs to the globin family. Expressed in the head and tail neurons and nerve cord.

May play a role as physiological sensor for oxygen via redox signaling and/or electron transport. The chain is Globin-like protein 6 from Caenorhabditis elegans.